The sequence spans 341 residues: RNA 3'-terminal phosphate cyclase (341 aa).

ATP contacts are provided by residues Q100 and F283–Q287. The active-site Tele-AMP-histidine intermediate is H307.

This sequence belongs to the RNA 3'-terminal cyclase family. Type 1 subfamily.

It localises to the cytoplasm. It carries out the reaction a 3'-end 3'-phospho-ribonucleotide-RNA + ATP = a 3'-end 2',3'-cyclophospho-ribonucleotide-RNA + AMP + diphosphate. Catalyzes the conversion of 3'-phosphate to a 2',3'-cyclic phosphodiester at the end of RNA. The mechanism of action of the enzyme occurs in 3 steps: (A) adenylation of the enzyme by ATP; (B) transfer of adenylate to an RNA-N3'P to produce RNA-N3'PP5'A; (C) and attack of the adjacent 2'-hydroxyl on the 3'-phosphorus in the diester linkage to produce the cyclic end product. The biological role of this enzyme is unknown but it is likely to function in some aspects of cellular RNA processing. The polypeptide is RNA 3'-terminal phosphate cyclase (rtcA) (Pyrococcus horikoshii (strain ATCC 700860 / DSM 12428 / JCM 9974 / NBRC 100139 / OT-3)).